Here is a 315-residue protein sequence, read N- to C-terminus: Acetyl-coenzyme A carboxylase carboxyl transferase subunit alpha (315 aa).

In terms of domain architecture, CoA carboxyltransferase C-terminal spans 32 to 289; sequence EIDMLEASLE…KEAFTKQLSE (258 aa).

The protein belongs to the AccA family. In terms of assembly, acetyl-CoA carboxylase is a heterohexamer composed of biotin carboxyl carrier protein (AccB), biotin carboxylase (AccC) and two subunits each of ACCase subunit alpha (AccA) and ACCase subunit beta (AccD).

The protein resides in the cytoplasm. The enzyme catalyses N(6)-carboxybiotinyl-L-lysyl-[protein] + acetyl-CoA = N(6)-biotinyl-L-lysyl-[protein] + malonyl-CoA. Its pathway is lipid metabolism; malonyl-CoA biosynthesis; malonyl-CoA from acetyl-CoA: step 1/1. Component of the acetyl coenzyme A carboxylase (ACC) complex. First, biotin carboxylase catalyzes the carboxylation of biotin on its carrier protein (BCCP) and then the CO(2) group is transferred by the carboxyltransferase to acetyl-CoA to form malonyl-CoA. The polypeptide is Acetyl-coenzyme A carboxylase carboxyl transferase subunit alpha (Staphylococcus carnosus (strain TM300)).